Consider the following 106-residue polypeptide: Pyrimidine/purine nucleoside phosphorylase (106 aa).

Belongs to the nucleoside phosphorylase PpnP family.

It carries out the reaction a purine D-ribonucleoside + phosphate = a purine nucleobase + alpha-D-ribose 1-phosphate. The catalysed reaction is adenosine + phosphate = alpha-D-ribose 1-phosphate + adenine. The enzyme catalyses cytidine + phosphate = cytosine + alpha-D-ribose 1-phosphate. It catalyses the reaction guanosine + phosphate = alpha-D-ribose 1-phosphate + guanine. It carries out the reaction inosine + phosphate = alpha-D-ribose 1-phosphate + hypoxanthine. The catalysed reaction is thymidine + phosphate = 2-deoxy-alpha-D-ribose 1-phosphate + thymine. The enzyme catalyses uridine + phosphate = alpha-D-ribose 1-phosphate + uracil. It catalyses the reaction xanthosine + phosphate = alpha-D-ribose 1-phosphate + xanthine. In terms of biological role, catalyzes the phosphorolysis of diverse nucleosides, yielding D-ribose 1-phosphate and the respective free bases. Can use uridine, adenosine, guanosine, cytidine, thymidine, inosine and xanthosine as substrates. Also catalyzes the reverse reactions. This chain is Pyrimidine/purine nucleoside phosphorylase, found in Burkholderia multivorans (strain ATCC 17616 / 249).